Consider the following 1256-residue polypeptide: MAKKFNYKLPSMVALTLVGSAVTAHQVQAAETTQDQTTNKNVLDSNKVKATTEQAKAEVKNPTQNISGTQVYQDPAIVQPKTANNKTGNAQVSQKVDTAQVNGDTRANQSATTNNTQPVAKSTSTTAPKTNTNVTNAGYSLVDDEDDNSENQINPELIKSAAKPAALETQYKTAAPKAATTSAPKAKTEATPKVTTFSASAQPRSVAATPKTSLPKYKPQVNSSINDYIRKNNLKAPKIEEDYTSYFPKYAYRNGVGRPEGIVVHDTANDRSTINGEISYMKNNYQNAFVHAFVDGDRIIETAPTDYLSWGVGAVGNPRFINVEIVHTHDYASFARSMNNYADYAATQLQYYGLKPDSAEYDGNGTVWTHYAVSKYLGGTDHADPHGYLRSHNYSYDQLYDLINEKYLIKMGKVAPWGTQSTTTPTTPSKPTTPSKPSTGKLTVAANNGVAQIKPTNSGLYTTVYDKTGKATNEVQKTFAVSKTATLGNQKFYLVQDYNSGNKFGWVKEGDVVYNTAKSPVNVNQSYSIKPGTKLYTVPWGTSKQVAGSVSGSGNQTFKASKQQQIDKSIYLYGSVNGKSGWVSKAYLVDTAKPTPTPTPKPSTPTTNNKLTVSSLNGVAQINAKNNGLFTTVYDKTGKPTKEVQKTFAVTKEASLGGNKFYLVKDYNSPTLIGWVKQGDVIYNNAKSPVNVMQTYTVKPGTKLYSVPWGTYKQEAGAVSGTGNQTFKATKQQQIDKSIYLFGTVNGKSGWVSKAYLAVPAAPKKAVAQPKTAVKAYTVTKPQTTQTVSKIAQVKPNNTGIRASVYEKTAKNGAKYADRTFYVTKERAHGNETYVLLNNTSHNIPLGWFNVKDLNVQNLGKEVKTTQKYTVNKSNNGLSMVPWGTKNQVILTGNNIAQGTFNATKQVSVGKDVYLYGTINNRTGWVNAKDLTAPTAVKPTTSAAKDYNYTYVIKNGNGYYYVTPNSDTAKYSLKAFNEQPFAVVKEQVINGQTWYYGKLSNGKLAWIKSTDLAKELIKYNQTGMALNQVAQIQAGLQYKPQVQRVPGKWTGANFNDVKHAMDTKRLAQDPALKYQFLRLDQPQNISIDKINQFLKGKGVLENQGAAFNKAAQMYGINEVYLISHALLETGNGTSQLAKGADVVNNKVVTNSNTKYHNVFGIAAYDNDPLREGIKYAKQAGWDTVSKAIVGGAKFIGNSYVKAGQNTLYKMRWNPAHPGTHQYATDVDWANINAKIIKGYYDKIGEVGKYFDIPQYK.

Residues 1–29 (MAKKFNYKLPSMVALTLVGSAVTAHQVQA) form the signal peptide. Over residues 103–138 (GDTRANQSATTNNTQPVAKSTSTTAPKTNTNVTNAG) the composition is skewed to polar residues. 3 disordered regions span residues 103 to 151 (GDTR…NSEN), 172 to 219 (KTAA…KYKP), and 419 to 440 (TQST…PSTG). 2 stretches are compositionally biased toward low complexity: residues 172–196 (KTAA…KVTT) and 421–439 (STTT…KPST). The tract at residues 199–775 (ASAQPRSVAA…AVAQPKTAVK (577 aa)) is N-acetylmuramoyl-L-alanine amidase. GW domains lie at 443–517 (TVAA…YNTA), 519–593 (SPVN…DTAK), 612–686 (TVSS…YNNA), 688–762 (SPVN…VPAA), 784–859 (TTQT…VQNL), 861–936 (KEVK…APTA), and 943–1017 (AAKD…KELI). The endo-beta-N-acetylglucosaminidase stretch occupies residues 776 to 1256 (AYTVTKPQTT…GKYFDIPQYK (481 aa)).

This sequence in the N-terminal section; belongs to the N-acetylmuramoyl-L-alanine amidase 2 family. In the C-terminal section; belongs to the glycosyl hydrolase 73 family. In terms of assembly, oligomer; forms a ring structure at the cell surface which is important for efficient partitioning of daughter cells after cell division. Post-translationally, undergoes proteolytic processing to generate the two extracellular lytic enzymes, probably at the septal region on the cell surface.

It localises to the secreted. The catalysed reaction is Hydrolyzes the link between N-acetylmuramoyl residues and L-amino acid residues in certain cell-wall glycopeptides.. It catalyses the reaction an N(4)-(oligosaccharide-(1-&gt;3)-[oligosaccharide-(1-&gt;6)]-beta-D-Man-(1-&gt;4)-beta-D-GlcNAc-(1-&gt;4)-alpha-D-GlcNAc)-L-asparaginyl-[protein] + H2O = an oligosaccharide-(1-&gt;3)-[oligosaccharide-(1-&gt;6)]-beta-D-Man-(1-&gt;4)-D-GlcNAc + N(4)-(N-acetyl-beta-D-glucosaminyl)-L-asparaginyl-[protein]. Functionally, endohydrolysis of the di-N-acetylchitobiosyl unit in high-mannose glycopeptides and glycoproteins containing the -[(Man)5(GlcNAc)2]-Asn structure. One N-acetyl-D-glucosamine residue remains attached to the protein; the rest of the oligosaccharide is released intact. Cleaves the peptidoglycan connecting the daughter cells at the end of the cell division cycle, resulting in the separation of the two newly divided cells. Acts as an autolysin in penicillin-induced lysis. The polypeptide is Bifunctional autolysin (atl) (Staphylococcus aureus (strain COL)).